A 798-amino-acid polypeptide reads, in one-letter code: Phenylalanine--tRNA ligase beta subunit (798 aa).

The region spanning 39–148 (SKHLGGFVVG…VTLAVGASLL (110 aa)) is the tRNA-binding domain. Residues 401–476 (DWQKSIVLRP…RINGYDNIPA (76 aa)) enclose the B5 domain. 4 residues coordinate Mg(2+): Asp-454, Asp-460, Glu-463, and Glu-464. Positions 704–797 (SALQPLDRDF…VAKATGGELR (94 aa)) constitute an FDX-ACB domain.

It belongs to the phenylalanyl-tRNA synthetase beta subunit family. Type 1 subfamily. Tetramer of two alpha and two beta subunits. Mg(2+) serves as cofactor.

Its subcellular location is the cytoplasm. The enzyme catalyses tRNA(Phe) + L-phenylalanine + ATP = L-phenylalanyl-tRNA(Phe) + AMP + diphosphate + H(+). This Paramagnetospirillum magneticum (strain ATCC 700264 / AMB-1) (Magnetospirillum magneticum) protein is Phenylalanine--tRNA ligase beta subunit.